The sequence spans 572 residues: Periplasmic pectate lyase (572 aa).

A signal peptide spans 1-23; sequence MKKRALLLSMSVLAMLYIPAGQA.

The protein belongs to the polysaccharide lyase 2 family.

The protein resides in the periplasm. It carries out the reaction Eliminative cleavage of (1-&gt;4)-alpha-D-galacturonan to give oligosaccharides with 4-deoxy-alpha-D-galact-4-enuronosyl groups at their non-reducing ends.. Its pathway is glycan metabolism; pectin degradation; 2-dehydro-3-deoxy-D-gluconate from pectin: step 2/5. This is Periplasmic pectate lyase (pelY) from Yersinia pseudotuberculosis serotype I (strain IP32953).